The following is a 167-amino-acid chain: Phosphopantetheine adenylyltransferase (167 aa).

Position 11 (serine 11) interacts with substrate. ATP-binding positions include 11 to 12 and histidine 19; that span reads SF. Substrate is bound by residues lysine 43, threonine 76, and arginine 90. ATP-binding positions include 91 to 93, glutamate 101, and 126 to 132; these read GIR and YDALSST.

This sequence belongs to the bacterial CoaD family. In terms of assembly, homohexamer. Mg(2+) is required as a cofactor.

The protein resides in the cytoplasm. The catalysed reaction is (R)-4'-phosphopantetheine + ATP + H(+) = 3'-dephospho-CoA + diphosphate. The protein operates within cofactor biosynthesis; coenzyme A biosynthesis; CoA from (R)-pantothenate: step 4/5. Its function is as follows. Reversibly transfers an adenylyl group from ATP to 4'-phosphopantetheine, yielding dephospho-CoA (dPCoA) and pyrophosphate. The polypeptide is Phosphopantetheine adenylyltransferase (Lacticaseibacillus casei (strain BL23) (Lactobacillus casei)).